We begin with the raw amino-acid sequence, 487 residues long: Wax ester synthase/diacylglycerol acyltransferase 3 (487 aa).

Residues 1 to 193 lie on the Cytoplasmic side of the membrane; the sequence is MYTMKKGKDM…KHASSNKKSW (193 aa). The Proton acceptor role is filled by His-151. A helical membrane pass occupies residues 194-214; it reads WLVGRFWFMIRIIFTTVVELF. Over 215-487 the chain is Lumenal; the sequence is KYLLTLCFMR…MEKGVHKMEV (273 aa).

The protein in the N-terminal section; belongs to the long-chain O-acyltransferase family. As to expression, mostly expressed in flowers and siliques.

The protein resides in the cell membrane. It localises to the endoplasmic reticulum membrane. It catalyses the reaction an acyl-CoA + a 1,2-diacyl-sn-glycerol = a triacyl-sn-glycerol + CoA. It carries out the reaction a long chain fatty alcohol + a fatty acyl-CoA = a wax ester + CoA. It participates in glycerolipid metabolism; triacylglycerol biosynthesis. Its pathway is lipid metabolism. Functionally, bifunctional wax ester synthase/diacylglycerol acyltransferase. Involved in cuticular wax biosynthesis. This Arabidopsis thaliana (Mouse-ear cress) protein is Wax ester synthase/diacylglycerol acyltransferase 3.